The following is a 357-amino-acid chain: Peptide chain release factor 1 (357 aa).

Gln-235 is subject to N5-methylglutamine. Residues 282-294 (RQKADTERSESRR) are compositionally biased toward basic and acidic residues. A disordered region spans residues 282 to 308 (RQKADTERSESRRSQVGSGDRSERIRT).

This sequence belongs to the prokaryotic/mitochondrial release factor family. Post-translationally, methylated by PrmC. Methylation increases the termination efficiency of RF1.

The protein resides in the cytoplasm. In terms of biological role, peptide chain release factor 1 directs the termination of translation in response to the peptide chain termination codons UAG and UAA. This Brucella anthropi (strain ATCC 49188 / DSM 6882 / CCUG 24695 / JCM 21032 / LMG 3331 / NBRC 15819 / NCTC 12168 / Alc 37) (Ochrobactrum anthropi) protein is Peptide chain release factor 1.